The following is a 541-amino-acid chain: Myrosinase 1 (541 aa).

The signal sequence occupies residues Met1–Gly19. Intrachain disulfides connect Cys24–Cys449, Cys32–Cys445, and Cys224–Cys232. The N-linked (GlcNAc...) asparagine glycan is linked to Asn33. Gln57 lines the a beta-D-glucoside pocket. Asn108 carries N-linked (GlcNAc...) asparagine glycosylation. His159 lines the a beta-D-glucoside pocket. Residue Asn175 is glycosylated (N-linked (GlcNAc...) asparagine). Asn204–Gln205 provides a ligand contact to a beta-D-glucoside. N-linked (GlcNAc...) asparagine glycosylation occurs at Asn236. Residue Tyr348 coordinates a beta-D-glucoside. Residues Asn356 and Asn379 are each glycosylated (N-linked (GlcNAc...) asparagine). A beta-D-glucoside contacts are provided by residues Glu420, Trp468, Glu475 to Phe476, and Phe484. The Nucleophile role is filled by Glu420. 2 N-linked (GlcNAc...) asparagine glycosylation sites follow: Asn493 and Asn512.

Belongs to the glycosyl hydrolase 1 family. In terms of assembly, homodimer. As to expression, expressed in guard cells, phloem-associated cells and myrosin cells.

It localises to the vacuole. It carries out the reaction a thioglucoside + H2O = a sugar + a thiol.. It catalyses the reaction Hydrolysis of terminal, non-reducing beta-D-glucosyl residues with release of beta-D-glucose.. Functionally, degradation of glucosinolates (glucose residue linked by a thioglucoside bound to an amino acid derivative) to glucose, sulfate and any of the products: thiocyanates, isothiocyanates, nitriles, epithionitriles or oxazolidine-2-thiones. These toxic degradation products can deter insect herbivores. Seems to function in abscisic acid (ABA) and methyl jasmonate (MeJA) signaling in guard cells. Functionally redundant with TGG2. Hydrolyzes sinigrin and, with lower efficiency, p-nitrophenyl beta-D-glucoside. The polypeptide is Myrosinase 1 (Arabidopsis thaliana (Mouse-ear cress)).